The chain runs to 86 residues: Large ribosomal subunit protein bL27 (86 aa).

The interval 1–26 (MATKKAGGSSRNGRDSAGRRLGIKKS) is disordered.

The protein belongs to the bacterial ribosomal protein bL27 family.

This chain is Large ribosomal subunit protein bL27, found in Rickettsia typhi (strain ATCC VR-144 / Wilmington).